The chain runs to 121 residues: Large ribosomal subunit protein bL12 (121 aa).

It belongs to the bacterial ribosomal protein bL12 family. In terms of assembly, homodimer. Part of the ribosomal stalk of the 50S ribosomal subunit. Forms a multimeric L10(L12)X complex, where L10 forms an elongated spine to which 2 to 4 L12 dimers bind in a sequential fashion. Binds GTP-bound translation factors.

Forms part of the ribosomal stalk which helps the ribosome interact with GTP-bound translation factors. Is thus essential for accurate translation. In Tremblaya princeps, this protein is Large ribosomal subunit protein bL12.